A 224-amino-acid chain; its full sequence is Probable octanoyltransferase (224 aa).

Positions Gly-28–Pro-199 constitute a BPL/LPL catalytic domain. Substrate contacts are provided by residues Arg-66 to His-73, Ser-130 to Gly-132, and Gly-143 to Ala-145. Cys-161 serves as the catalytic Acyl-thioester intermediate.

It belongs to the LipB family.

The protein resides in the cytoplasm. It carries out the reaction octanoyl-[ACP] + L-lysyl-[protein] = N(6)-octanoyl-L-lysyl-[protein] + holo-[ACP] + H(+). It participates in protein modification; protein lipoylation via endogenous pathway; protein N(6)-(lipoyl)lysine from octanoyl-[acyl-carrier-protein]: step 1/2. Its function is as follows. Catalyzes the transfer of endogenously produced octanoic acid from octanoyl-acyl-carrier-protein onto the lipoyl domains of lipoate-dependent enzymes. Lipoyl-ACP can also act as a substrate although octanoyl-ACP is likely to be the physiological substrate. In Pyrobaculum aerophilum (strain ATCC 51768 / DSM 7523 / JCM 9630 / CIP 104966 / NBRC 100827 / IM2), this protein is Probable octanoyltransferase.